The chain runs to 124 residues: Ragulator complex protein LAMTOR2 homolog (124 aa).

The protein belongs to the GAMAD family. Part of the Ragulator complex.

In terms of biological role, regulator of the TOR pathway, a signaling cascade that promotes cell growth in response to growth factors, energy levels, and amino acids. May activate the TOR signaling cascade in response to amino acids. In Caenorhabditis elegans, this protein is Ragulator complex protein LAMTOR2 homolog.